Consider the following 386-residue polypeptide: O-phospho-L-seryl-tRNA:Cys-tRNA synthase (386 aa).

Pyridoxal 5'-phosphate-binding positions include 89-90, N196, and 219-221; these read AR and SGH. K222 is subject to N6-(pyridoxal phosphate)lysine.

The protein belongs to the SepCysS family. In terms of assembly, homodimer. Interacts with SepRS. Pyridoxal 5'-phosphate is required as a cofactor.

The catalysed reaction is O-phospho-L-seryl-tRNA(Cys) + hydrogen sulfide + H(+) = L-cysteinyl-tRNA(Cys) + phosphate. In terms of biological role, converts O-phospho-L-seryl-tRNA(Cys) (Sep-tRNA(Cys)) to L-cysteinyl-tRNA(Cys) (Cys-tRNA(Cys)). This is O-phospho-L-seryl-tRNA:Cys-tRNA synthase from Methanosarcina mazei (strain ATCC BAA-159 / DSM 3647 / Goe1 / Go1 / JCM 11833 / OCM 88) (Methanosarcina frisia).